The following is a 360-amino-acid chain: Phospho-N-acetylmuramoyl-pentapeptide-transferase (360 aa).

The next 10 membrane-spanning stretches (helical) occupy residues 26 to 46 (AILS…IMIK), 70 to 90 (GTPT…ILLW), 94 to 114 (SNPY…VGFV), 132 to 152 (WKYF…YAYG), 168 to 188 (VMPQ…VGTS), 199 to 219 (GLAI…AWAT), 236 to 256 (ASEL…FLWF), 263 to 283 (VFMG…IAVL), 288 to 308 (LVLV…ILQV), and 338 to 358 (VIVR…ATLK).

The protein belongs to the glycosyltransferase 4 family. MraY subfamily. It depends on Mg(2+) as a cofactor.

It is found in the cell inner membrane. It catalyses the reaction UDP-N-acetyl-alpha-D-muramoyl-L-alanyl-gamma-D-glutamyl-meso-2,6-diaminopimeloyl-D-alanyl-D-alanine + di-trans,octa-cis-undecaprenyl phosphate = di-trans,octa-cis-undecaprenyl diphospho-N-acetyl-alpha-D-muramoyl-L-alanyl-D-glutamyl-meso-2,6-diaminopimeloyl-D-alanyl-D-alanine + UMP. It participates in cell wall biogenesis; peptidoglycan biosynthesis. Its function is as follows. Catalyzes the initial step of the lipid cycle reactions in the biosynthesis of the cell wall peptidoglycan: transfers peptidoglycan precursor phospho-MurNAc-pentapeptide from UDP-MurNAc-pentapeptide onto the lipid carrier undecaprenyl phosphate, yielding undecaprenyl-pyrophosphoryl-MurNAc-pentapeptide, known as lipid I. This Vibrio parahaemolyticus serotype O3:K6 (strain RIMD 2210633) protein is Phospho-N-acetylmuramoyl-pentapeptide-transferase.